The primary structure comprises 421 residues: Gamma-glutamyl phosphate reductase (421 aa).

It belongs to the gamma-glutamyl phosphate reductase family.

It localises to the cytoplasm. The catalysed reaction is L-glutamate 5-semialdehyde + phosphate + NADP(+) = L-glutamyl 5-phosphate + NADPH + H(+). Its pathway is amino-acid biosynthesis; L-proline biosynthesis; L-glutamate 5-semialdehyde from L-glutamate: step 2/2. Catalyzes the NADPH-dependent reduction of L-glutamate 5-phosphate into L-glutamate 5-semialdehyde and phosphate. The product spontaneously undergoes cyclization to form 1-pyrroline-5-carboxylate. The protein is Gamma-glutamyl phosphate reductase of Pseudomonas aeruginosa (strain LESB58).